Consider the following 228-residue polypeptide: Woronin body membrane protein wscA (228 aa).

The next 4 helical transmembrane spans lie at 89 to 109, 130 to 150, 162 to 182, and 185 to 205; these read MTLY…GILQ, LIVS…IAGA, AGFM…LAFA, and FLPE…IGTY.

Belongs to the peroxisomal membrane protein PXMP2/4 family. Self-assembles into detergent-resistant oligomers and forms a complex with hexA assemblies.

Its subcellular location is the peroxisome membrane. The protein resides in the cell septum. Its function is as follows. Woronin sorting complex protein involved in both Woronin bodies (WB) formation and inherence. Localizes to large peroxisome membranes where it self-assembles into detergent-resistant oligomers that envelop hex-1 assemblies, producing asymmetrical nascent WBs. These structures are then delivered to the cell cortex, which permits partitioning of the nascent WB and WB inheritance. The polypeptide is Woronin body membrane protein wscA (Aspergillus fumigatus (strain ATCC MYA-4609 / CBS 101355 / FGSC A1100 / Af293) (Neosartorya fumigata)).